The sequence spans 690 residues: Iron-regulated transcriptional activator AFT1 (690 aa).

A disordered region spans residues 1-21; sequence MEGFNPADIEHASPINSSDSH. D110 is a binding site for Zn(2+). K111, K115, I131, E132, R133, S134, D135, and K138 together coordinate DNA. Position 143 (C143) interacts with Zn(2+). Residues 148-159 show a composition bias toward basic residues; the sequence is RGRNARRKRKDK. Residues 148 to 205 are disordered; the sequence is RGRNARRKRKDKPKGQDHEDEKSKINDDELEYASPSNATVTNGPQTSPDQTSSIKPKK. A compositionally biased stretch (basic and acidic residues) spans 160-174; the sequence is PKGQDHEDEKSKIND. The span at 181-201 shows a compositional bias: polar residues; it reads SPSNATVTNGPQTSPDQTSSI. C215 serves as a coordination point for Zn(2+). K226 is a binding site for DNA. Zn(2+)-binding residues include H239 and H241. Residue N263 participates in DNA binding. The short motif at 291 to 293 is the CDC [2Fe-2S] cluster binding motif element; it reads CDC. Disordered regions lie at residues 335–357 and 612–655; these read PCLPSVNNTGSINTNNVRKPKSQ and SSNE…VQKD. Polar residues predominate over residues 339–351; the sequence is SVNNTGSINTNNV. The segment covering 621–638 has biased composition (low complexity); it reads HQYGPQQQPPQQLQYHQN. Residues 639 to 649 show a composition bias toward basic and acidic residues; sequence QPHDGHNHEQH.

Homodimer. Dimerization decreases the DNA-binding activity.

It localises to the nucleus. With respect to regulation, dimerization via the binding of Fe(2+) or a [2Fe-2S] cluster decreases the DNA-binding activity. Its function is as follows. Transcription factor that activates the genes for FRE1, FRE2 and FET3 in response to iron deprivationand thereby plays a central role in iron homeostasis. Also required for the expression of LSO1. Recognizes the consensus iron-responsive element (Fe-RE) sequence 5'-CACCC-3' in the promoters of target genes. Iron could interact directly with AFT1 and inhibits its activity. In high iron condition, the presence of Fe(2+) or [2Fe-2S] cluster leads to dimerization, which in turn leads to a decrease in DNA affinity. The protein is Iron-regulated transcriptional activator AFT1 of Saccharomyces cerevisiae (strain ATCC 204508 / S288c) (Baker's yeast).